Here is a 200-residue protein sequence, read N- to C-terminus: UPF0637 protein LCK_01372 (200 aa).

The protein belongs to the UPF0637 family.

The sequence is that of UPF0637 protein LCK_01372 from Leuconostoc citreum (strain KM20).